Reading from the N-terminus, the 214-residue chain is Holliday junction branch migration complex subunit RuvA (214 aa).

Residues 1–63 are domain I; that stretch reads MIASLSGTVE…EDALTLYGFA (63 aa). A domain II region spans residues 64 to 142; it reads DRDEREVFEV…PTGEPVPGAE (79 aa). A flexible linker region spans residues 143–151; sequence AEASDEPAV. Residues 151 to 214 form a domain III region; that stretch reads VETVWHADVV…GMAGAVRGGR (64 aa).

The protein belongs to the RuvA family. Homotetramer. Forms an RuvA(8)-RuvB(12)-Holliday junction (HJ) complex. HJ DNA is sandwiched between 2 RuvA tetramers; dsDNA enters through RuvA and exits via RuvB. An RuvB hexamer assembles on each DNA strand where it exits the tetramer. Each RuvB hexamer is contacted by two RuvA subunits (via domain III) on 2 adjacent RuvB subunits; this complex drives branch migration. In the full resolvosome a probable DNA-RuvA(4)-RuvB(12)-RuvC(2) complex forms which resolves the HJ.

The protein resides in the cytoplasm. Its function is as follows. The RuvA-RuvB-RuvC complex processes Holliday junction (HJ) DNA during genetic recombination and DNA repair, while the RuvA-RuvB complex plays an important role in the rescue of blocked DNA replication forks via replication fork reversal (RFR). RuvA specifically binds to HJ cruciform DNA, conferring on it an open structure. The RuvB hexamer acts as an ATP-dependent pump, pulling dsDNA into and through the RuvAB complex. HJ branch migration allows RuvC to scan DNA until it finds its consensus sequence, where it cleaves and resolves the cruciform DNA. In Micrococcus luteus (strain ATCC 4698 / DSM 20030 / JCM 1464 / CCM 169 / CCUG 5858 / IAM 1056 / NBRC 3333 / NCIMB 9278 / NCTC 2665 / VKM Ac-2230) (Micrococcus lysodeikticus), this protein is Holliday junction branch migration complex subunit RuvA.